Consider the following 301-residue polypeptide: MENLLSVKDLSKQQILDLLALAKAVKANPAEYSQALAGKSIVTIYEKPSLRTRVTFDIGIHKLGGHAVYLDAQNGAIGERETVKDFAANISRWADAIVARVVSHKTLEGLVEHGSVPVVNSLCDLYHPCQALADFLTISEHYEDVSKVKLAYVGEGNNVTHSLMLTGAILGAEVTAVCPRGSSPDAQIVKQAMALAEISGGKINVTDNLDAIVDYDVIYGDTWVSMGDDTPLAQVKEKYMPYQINKALLMRTGIKHVLHCQPAHRELEITSEVMDGEHSLIFDQAENRMHAQNAVLLTLLK.

Carbamoyl phosphate contacts are provided by residues R100 and 127 to 130 (HPCQ). L-ornithine is bound by residues N158, D221, and 225–226 (SM). Carbamoyl phosphate is bound by residues C260 and R288.

It belongs to the aspartate/ornithine carbamoyltransferase superfamily. OTCase family.

Its subcellular location is the cytoplasm. It carries out the reaction carbamoyl phosphate + L-ornithine = L-citrulline + phosphate + H(+). It functions in the pathway amino-acid biosynthesis; L-arginine biosynthesis; L-arginine from L-ornithine and carbamoyl phosphate: step 1/3. Its function is as follows. Reversibly catalyzes the transfer of the carbamoyl group from carbamoyl phosphate (CP) to the N(epsilon) atom of ornithine (ORN) to produce L-citrulline. In Vibrio sp. (strain 2693), this protein is Ornithine carbamoyltransferase (argF).